A 134-amino-acid polypeptide reads, in one-letter code: Early E3B 14.5 kDa protein (134 aa).

The signal sequence occupies residues 1–21; the sequence is MQAMLPVILILLLPCIPLAST. The chain crosses the membrane as a helical span at residues 54 to 78; the sequence is YWIVIVGIINILSCTFFSITIYPTF.

Belongs to the adenoviridae E3_14 family. Post-translationally, phosphorylated on serine; O-glycosylated, but not N-glycosylated.

It localises to the host membrane. Its function is as follows. Down-regulates the EGF receptor and prevents cytolysis by TNF. This chain is Early E3B 14.5 kDa protein, found in Homo sapiens (Human).